Reading from the N-terminus, the 232-residue chain is 5'-methylthioadenosine/S-adenosylhomocysteine nucleosidase (232 aa).

The Proton acceptor role is filled by E12. Substrate-binding positions include G78, I152, and 173–174 (ME). D197 functions as the Proton donor in the catalytic mechanism.

Belongs to the PNP/UDP phosphorylase family. MtnN subfamily. As to quaternary structure, homodimer.

It catalyses the reaction S-adenosyl-L-homocysteine + H2O = S-(5-deoxy-D-ribos-5-yl)-L-homocysteine + adenine. It carries out the reaction S-methyl-5'-thioadenosine + H2O = 5-(methylsulfanyl)-D-ribose + adenine. The catalysed reaction is 5'-deoxyadenosine + H2O = 5-deoxy-D-ribose + adenine. The protein operates within amino-acid biosynthesis; L-methionine biosynthesis via salvage pathway; S-methyl-5-thio-alpha-D-ribose 1-phosphate from S-methyl-5'-thioadenosine (hydrolase route): step 1/2. In terms of biological role, catalyzes the irreversible cleavage of the glycosidic bond in both 5'-methylthioadenosine (MTA) and S-adenosylhomocysteine (SAH/AdoHcy) to adenine and the corresponding thioribose, 5'-methylthioribose and S-ribosylhomocysteine, respectively. Also cleaves 5'-deoxyadenosine, a toxic by-product of radical S-adenosylmethionine (SAM) enzymes, into 5-deoxyribose and adenine. Thus, is required for in vivo function of the radical SAM enzymes biotin synthase and lipoic acid synthase, that are inhibited by 5'-deoxyadenosine accumulation. In Escherichia coli O9:H4 (strain HS), this protein is 5'-methylthioadenosine/S-adenosylhomocysteine nucleosidase.